The chain runs to 135 residues: Lysozyme 2 (135 aa).

The N-terminal stretch at 1 to 18 (MNFLILFCVVASASVVYS) is a signal peptide. Residues 19–135 (SISDQCLRCI…WRLVQAKGCS (117 aa)) enclose the I-type lysozyme domain. 6 disulfide bridges follow: cysteine 24–cysteine 100, cysteine 29–cysteine 35, cysteine 40–cysteine 49, cysteine 62–cysteine 82, cysteine 72–cysteine 78, and cysteine 96–cysteine 114. The active-site Proton donor is glutamate 32. The Nucleophile role is filled by aspartate 43. Position 55–61 (55–61 (KQGYWTD)) interacts with substrate. Substrate is bound by residues tyrosine 86 and 107 to 109 (HNG).

Expressed in the epithelia of the basophil cells in the digestive tubules, but not in the epithelial cells lining the digestive ducts and stomach. Expressed at a much lower level in the style sac-midgut tissues. No expression detected in mantle, gills, labial palps or hemocytes.

The protein localises to the secreted. It catalyses the reaction Hydrolysis of (1-&gt;4)-beta-linkages between N-acetylmuramic acid and N-acetyl-D-glucosamine residues in a peptidoglycan and between N-acetyl-D-glucosamine residues in chitodextrins.. Activity decreased by 80% by addition of 0.01 M calcium, zinc or magnesium. Activity only decreased by 17% by addition of ammonium, and by 2% by addition of sodium. The main role of this lysozyme is in digestion. Has antibacterial activity against the Gram-positive bacterium P.cerevisiae and the Gram-negative bacteria E.coli and V.vulnificus. Shows some chitinase activity but no isopeptidase activity. In Crassostrea virginica (Eastern oyster), this protein is Lysozyme 2.